Reading from the N-terminus, the 306-residue chain is Type 3 secretion system translocon protein SctB (306 aa).

The helical transmembrane segment at 128 to 152 threads the bilayer; that stretch reads LMIAMAVVSGIMAATSTVASAFSIA.

It belongs to the SctB/YopD family. As to quaternary structure, the core secretion machinery of the T3SS is composed of approximately 20 different proteins, including cytoplasmic components, a base, an export apparatus and a needle. This subunit is involved in the formation of a pore, called the translocon, in host membrane. Interacts with YopB/SctE and YopE. Together with YopB/SctE, forms a multimeric integral membrane complex with a mass of between 500 and 700 kDa. Interacts with its cognate chaperone SycD.

The protein localises to the secreted. It localises to the host membrane. Component of the type III secretion system (T3SS), also called injectisome, which is used to inject bacterial effector proteins into eukaryotic host cells. YopB/SctE and YopD/SctB are inserted into the host membrane where they form a pore and allow the translocation of effector proteins into the cytosol of target cells. In terms of biological role, involved in pathogenesis. Essential for the establishment of Yersinia infections in a mouse model system, but not for the targeting of effector Yops. May modulate the host's immune response at a distance from the site of infection. The sequence is that of Type 3 secretion system translocon protein SctB from Yersinia enterocolitica.